The primary structure comprises 136 residues: Plastocyanin (136 aa).

Residues 1–34 form the signal peptide; that stretch reads MSLVFNLVKRLQLILLSLVVGGLAVAFLSNPAAA. The Plastocyanin-like domain occupies 35–136; that stretch reads ETYIVKMGSD…GMVGKIIVNG (102 aa). Positions 73, 120, 123, and 128 each coordinate Cu cation.

This sequence belongs to the plastocyanin family. Cu(2+) serves as cofactor.

The protein resides in the cellular thylakoid membrane. Participates in electron transfer between P700 and the cytochrome b6-f complex in photosystem I. This chain is Plastocyanin, found in Synechococcus sp. (strain JA-2-3B'a(2-13)) (Cyanobacteria bacterium Yellowstone B-Prime).